A 178-amino-acid chain; its full sequence is Ras-like protein (178 aa).

1–6 lines the GTP pocket; the sequence is GGVGKS. An Effector region motif is present at residues 21–29; it reads YDPTIEDSY. GTP-binding positions include 46–50 and 105–108; these read DTAGQ and NKCD. Cys-175 bears the Cysteine methyl ester mark. The S-geranylgeranyl cysteine moiety is linked to residue Cys-175. The propeptide at 176–178 is removed in mature form; sequence SIL.

The protein belongs to the small GTPase superfamily. Ras family.

The protein localises to the cell membrane. It catalyses the reaction GTP + H2O = GDP + phosphate + H(+). With respect to regulation, alternates between an inactive form bound to GDP and an active form bound to GTP. Activated by a guanine nucleotide-exchange factor (GEF) and inactivated by a GTPase-activating protein (GAP). In terms of biological role, ras proteins bind GDP/GTP and possess intrinsic GTPase activity. The sequence is that of Ras-like protein from Artemia salina (Brine shrimp).